A 293-amino-acid polypeptide reads, in one-letter code: 4-hydroxy-tetrahydrodipicolinate synthase (293 aa).

Thr-45 serves as a coordination point for pyruvate. Tyr-133 functions as the Proton donor/acceptor in the catalytic mechanism. Catalysis depends on Lys-161, which acts as the Schiff-base intermediate with substrate. Ile-203 provides a ligand contact to pyruvate.

This sequence belongs to the DapA family. Homotetramer; dimer of dimers.

It localises to the cytoplasm. The enzyme catalyses L-aspartate 4-semialdehyde + pyruvate = (2S,4S)-4-hydroxy-2,3,4,5-tetrahydrodipicolinate + H2O + H(+). The protein operates within amino-acid biosynthesis; L-lysine biosynthesis via DAP pathway; (S)-tetrahydrodipicolinate from L-aspartate: step 3/4. Its function is as follows. Catalyzes the condensation of (S)-aspartate-beta-semialdehyde [(S)-ASA] and pyruvate to 4-hydroxy-tetrahydrodipicolinate (HTPA). In Pseudoalteromonas atlantica (strain T6c / ATCC BAA-1087), this protein is 4-hydroxy-tetrahydrodipicolinate synthase.